The chain runs to 282 residues: MDGAKAEVFSVSVDTKMGAFKNSLLLLTLLLAIHLEASKIVYKKPLYGNSNIIKDKRIKTKPVKLETSTMSSTGVASSSTTAEEDWPTAVEFVIMTTPASELEASTETIGNNGTTETTVGEAPIIGSSEGSTRSMEPTTASPLMSTNPSSSSSLVSTIPLPPTAGLPVQDNQPVPCTCGVFLSSQIPNGLPTKPLIHQELDHMFPCNAIGRKQCQTKCLETIVQHLPNSANIVCSALGHDCHKERAYLFIKNCHNQWVNTNLQAGREYCCRSGVPYRCPLMG.

The interval 103–156 (EASTETIGNNGTTETTVGEAPIIGSSEGSTRSMEPTTASPLMSTNPSSSSSLVS) is disordered. Residues 106 to 118 (TETIGNNGTTETT) are compositionally biased toward low complexity. Polar residues predominate over residues 128 to 140 (SEGSTRSMEPTTA). The span at 141 to 156 (SPLMSTNPSSSSSLVS) shows a compositional bias: low complexity.

In terms of tissue distribution, expressed in follicle cells during vitelline membrane formation.

The protein is Follicle cell protein 3C-1 (Fcp3C) of Drosophila melanogaster (Fruit fly).